The following is a 312-amino-acid chain: uncharacterized protein (312 aa).

It belongs to the asfivirus CP312R family.

It is found in the virion. This is an uncharacterized protein from African swine fever virus (isolate Tick/Malawi/Lil 20-1/1983) (ASFV).